We begin with the raw amino-acid sequence, 2207 residues long: Desmoplakin-B (2207 aa).

Coiled coils occupy residues 506–916, 952–1000, and 1029–1063; these read MEEL…EAGK, AKHA…EQGR, and TERL…LLKN. Basic and acidic residues predominate over residues 905–924; sequence KQRQVAEEEAGKRRRTESQL. The tract at residues 905 to 933 is disordered; the sequence is KQRQVAEEEAGKRRRTESQLEKSSQAMRE. Plectin repeat units follow at residues 1369 to 1406, 1407 to 1445, 1446 to 1483, 1571 to 1609, 1610 to 1647, 1685 to 1723, 1783 to 1811, 1992 to 2029, and 2068 to 2106; these read LLEA…DKKQ, LLIA…TLRL, LQAQ…YQAL, YLRG…TLEL, LEAQ…KDKL, LLEA…NQIL, IVDP…FLEL, LLEA…MANR, and FLEF…AQRL. The span at 2155 to 2164 shows a compositional bias: polar residues; it reads ISSPYNLSNP. The disordered stretch occupies residues 2155 to 2207; sequence ISSPYNLSNPGSASGSRSGSRRGSVDYSLSPSSSSRYSSFSYSRTSFSSRSLS. Low complexity predominate over residues 2165 to 2207; it reads GSASGSRSGSRRGSVDYSLSPSSSSRYSSFSYSRTSFSSRSLS.

It belongs to the plakin or cytolinker family.

The protein localises to the cell junction. The protein resides in the desmosome. It localises to the cell membrane. Involved in the organization of desmosome cell-cell junctions. Of particular importance in cell adhesion in the skin and during cardiac development. May also play a role in the regulation of Wnt, TGF-beta and Hippo signaling pathways. This Danio rerio (Zebrafish) protein is Desmoplakin-B.